The primary structure comprises 259 residues: L-ornithine N(alpha)-acyltransferase (259 aa).

This sequence belongs to the acetyltransferase family. OlsB subfamily.

It catalyses the reaction a (3R)-hydroxyacyl-[ACP] + L-ornithine = a lyso-ornithine lipid + holo-[ACP] + H(+). The protein operates within lipid metabolism. Catalyzes the first step in the biosynthesis of ornithine lipids, which are phosphorus-free membrane lipids. Catalyzes the 3-hydroxyacyl-acyl carrier protein-dependent acylation of ornithine to form lyso-ornithine lipid (LOL). The protein is L-ornithine N(alpha)-acyltransferase of Rhodobacter capsulatus (strain ATCC BAA-309 / NBRC 16581 / SB1003).